The chain runs to 1002 residues: DNA-directed RNA polymerase 1B, mitochondrial (1002 aa).

The transit peptide at 1–21 directs the protein to the mitochondrion; that stretch reads MWRYISKHAYSRKFRNSHDSA. Catalysis depends on residues Asp703, Lys778, and Asp935.

The protein belongs to the phage and mitochondrial RNA polymerase family.

Its subcellular location is the mitochondrion. It catalyses the reaction RNA(n) + a ribonucleoside 5'-triphosphate = RNA(n+1) + diphosphate. Functionally, DNA-dependent RNA polymerase catalyzes the transcription of DNA into RNA using the four ribonucleoside triphosphates as substrates. In Nicotiana tabacum (Common tobacco), this protein is DNA-directed RNA polymerase 1B, mitochondrial (RPOT1-TOM).